The sequence spans 331 residues: Fructose-1,6-bisphosphatase class 1 2 (331 aa).

Mg(2+) contacts are provided by Glu-91, Asp-112, Leu-114, and Asp-115. Substrate contacts are provided by residues 115–118 (DGSS), Asn-207, Tyr-238, and Lys-268. Glu-274 contacts Mg(2+).

The protein belongs to the FBPase class 1 family. As to quaternary structure, homotetramer. Mg(2+) is required as a cofactor.

The protein localises to the cytoplasm. The catalysed reaction is beta-D-fructose 1,6-bisphosphate + H2O = beta-D-fructose 6-phosphate + phosphate. It functions in the pathway carbohydrate biosynthesis; Calvin cycle. This is Fructose-1,6-bisphosphatase class 1 2 from Acaryochloris marina (strain MBIC 11017).